A 355-amino-acid chain; its full sequence is tRNA N6-adenosine threonylcarbamoyltransferase (355 aa).

Residues histidine 111 and histidine 115 each coordinate Fe cation. Substrate is bound by residues 134-138 (LVSGG), aspartate 167, glycine 180, aspartate 184, and asparagine 279. Aspartate 307 provides a ligand contact to Fe cation.

This sequence belongs to the KAE1 / TsaD family. Fe(2+) is required as a cofactor.

Its subcellular location is the cytoplasm. It carries out the reaction L-threonylcarbamoyladenylate + adenosine(37) in tRNA = N(6)-L-threonylcarbamoyladenosine(37) in tRNA + AMP + H(+). Its function is as follows. Required for the formation of a threonylcarbamoyl group on adenosine at position 37 (t(6)A37) in tRNAs that read codons beginning with adenine. Is involved in the transfer of the threonylcarbamoyl moiety of threonylcarbamoyl-AMP (TC-AMP) to the N6 group of A37, together with TsaE and TsaB. TsaD likely plays a direct catalytic role in this reaction. This chain is tRNA N6-adenosine threonylcarbamoyltransferase, found in Picosynechococcus sp. (strain ATCC 27264 / PCC 7002 / PR-6) (Agmenellum quadruplicatum).